A 373-amino-acid chain; its full sequence is Coiled-coil domain-containing protein 34 (373 aa).

2 disordered regions span residues 1-112 and 118-137; these read MWAA…SLRG and CAST…QVRL. Serine 52 carries the phosphoserine modification. The span at 61–76 shows a compositional bias: polar residues; sequence NSTRSLLSPLGHQSFQ. Positions 77 to 101 are enriched in acidic residues; it reads FDEDDGDGEDEEDVDDEEDVDEDAH. Residues 152–286 are a coiled coil; it reads KEKEERDRLQ…QEWLENAKHK (135 aa). The interval 324 to 352 is disordered; it reads IHMPPPKEAKDLSGRKSKRPVISQPHKSS. Over residues 328–337 the composition is skewed to basic and acidic residues; sequence PPKEAKDLSG.

In terms of tissue distribution, expressed in sperm.

The protein localises to the cell projection. The protein resides in the cilium. It is found in the flagellum. Functionally, involved in spermatogenesis. Has a probable role in anterograde intraflagellar transport which is essential for the formation of sperm flagella. This is Coiled-coil domain-containing protein 34 (CCDC34) from Homo sapiens (Human).